Reading from the N-terminus, the 151-residue chain is Cytochrome c-type biogenesis protein CcmE (151 aa).

Topologically, residues 1–9 (MKGLKKKRR) are cytoplasmic. The chain crosses the membrane as a helical; Signal-anchor for type II membrane protein span at residues 10–30 (IQIIALAFVALAGSTALIGYA). Residues 31-151 (MRDGINFFRS…FQHTEDQPQG (121 aa)) are Periplasmic-facing. Heme contacts are provided by H123 and Y127.

This sequence belongs to the CcmE/CycJ family.

It localises to the cell inner membrane. Heme chaperone required for the biogenesis of c-type cytochromes. Transiently binds heme delivered by CcmC and transfers the heme to apo-cytochromes in a process facilitated by CcmF and CcmH. The chain is Cytochrome c-type biogenesis protein CcmE from Cereibacter sphaeroides (strain ATCC 17029 / ATH 2.4.9) (Rhodobacter sphaeroides).